The sequence spans 122 residues: Large ribosomal subunit protein uL14 (122 aa).

Belongs to the universal ribosomal protein uL14 family. As to quaternary structure, part of the 50S ribosomal subunit. Forms a cluster with proteins L3 and L19. In the 70S ribosome, L14 and L19 interact and together make contacts with the 16S rRNA in bridges B5 and B8.

Binds to 23S rRNA. Forms part of two intersubunit bridges in the 70S ribosome. This chain is Large ribosomal subunit protein uL14, found in Ectopseudomonas mendocina (strain ymp) (Pseudomonas mendocina).